The sequence spans 165 residues: Xanthine-guanine phosphoribosyltransferase (165 aa).

Residues 41–42 (RG) and 98–106 (DDLTDTGKT) contribute to the 5-phospho-alpha-D-ribose 1-diphosphate site. Asp99 provides a ligand contact to Mg(2+). 2 residues coordinate guanine: Asp102 and Ile145. Xanthine-binding residues include Asp102 and Ile145. GMP contacts are provided by residues 102–106 (DTGKT) and 144–145 (WI).

The protein belongs to the purine/pyrimidine phosphoribosyltransferase family. XGPT subfamily. In terms of assembly, homotetramer. Mg(2+) is required as a cofactor.

It is found in the cell inner membrane. It catalyses the reaction GMP + diphosphate = guanine + 5-phospho-alpha-D-ribose 1-diphosphate. The enzyme catalyses XMP + diphosphate = xanthine + 5-phospho-alpha-D-ribose 1-diphosphate. The catalysed reaction is IMP + diphosphate = hypoxanthine + 5-phospho-alpha-D-ribose 1-diphosphate. It participates in purine metabolism; GMP biosynthesis via salvage pathway; GMP from guanine: step 1/1. Its pathway is purine metabolism; XMP biosynthesis via salvage pathway; XMP from xanthine: step 1/1. Functionally, purine salvage pathway enzyme that catalyzes the transfer of the ribosyl-5-phosphate group from 5-phospho-alpha-D-ribose 1-diphosphate (PRPP) to the N9 position of the 6-oxopurines guanine and xanthine to form the corresponding ribonucleotides GMP (guanosine 5'-monophosphate) and XMP (xanthosine 5'-monophosphate), with the release of PPi. To a lesser extent, also acts on hypoxanthine. In Brucella anthropi (strain ATCC 49188 / DSM 6882 / CCUG 24695 / JCM 21032 / LMG 3331 / NBRC 15819 / NCTC 12168 / Alc 37) (Ochrobactrum anthropi), this protein is Xanthine-guanine phosphoribosyltransferase.